A 391-amino-acid chain; its full sequence is Inner membrane protein YdcO (391 aa).

Residues 1 to 9 (MRLFSIPPP) lie on the Cytoplasmic side of the membrane. A helical membrane pass occupies residues 10 to 30 (TLLAGFLAVLIGYASSAAIIW). At 31–42 (QAAIVAGATTAQ) the chain is on the periplasmic side. Residues 43–63 (ISGWMTALGLAMGVSTLTLTL) traverse the membrane as a helical segment. The Cytoplasmic portion of the chain corresponds to 64–93 (WYRVPVLTAWSTPGAALLVTGLQGLTLNEA). Residues 94–114 (IGVFIVTNALIVLCGITGLFA) traverse the membrane as a helical segment. Over 115–123 (RLMRIIPHS) the chain is Periplasmic. Residues 124-144 (LAAAMLAGILLRFGLQAFASL) traverse the membrane as a helical segment. The Cytoplasmic portion of the chain corresponds to 145–167 (DGQFTLCGSMLLVWLATKAVAPR). Residues 168–188 (YAVIAAMIIGIVIVIAQGDVV) traverse the membrane as a helical segment. Residues 189-200 (TTDVVFKPVLPT) lie on the Periplasmic side of the membrane. Residues 201–221 (YITPDFSFAHSLSVALPLFLV) traverse the membrane as a helical segment. Residues 222 to 246 (TMASQNAPGIAAMKAAGYSAPVSPL) lie on the Cytoplasmic side of the membrane. Residues 247–267 (IVFTGLLALVFSPFGVYSVGI) traverse the membrane as a helical segment. The Periplasmic portion of the chain corresponds to 268 to 287 (AAITAAICQSPEAHPDKDQR). The chain crosses the membrane as a helical span at residues 288-308 (WLAAAVAGIFYLLAGLFGSAI). At 309-311 (TGM) the chain is on the cytoplasmic side. A helical membrane pass occupies residues 312-332 (MAALPVSWIQMLAGLALLSTI). Residues 333-361 (GGSLYQALHNERERDAAVVAFLVTASGLT) lie on the Periplasmic side of the membrane. A helical membrane pass occupies residues 362-382 (LVGIGSAFWGLIAGGVCYVVL). Residues 383–391 (NLIADRNRY) lie on the Cytoplasmic side of the membrane.

It localises to the cell inner membrane. In Escherichia coli (strain K12), this protein is Inner membrane protein YdcO (ydcO).